The primary structure comprises 409 residues: Exonuclease V (409 aa).

Cysteine 86 is a [4Fe-4S] cluster binding site. Mg(2+) is bound by residues aspartate 176 and aspartate 207. Residues cysteine 386, cysteine 389, and cysteine 395 each coordinate [4Fe-4S] cluster.

The protein belongs to the EXO5 family. In terms of assembly, monomer. Mg(2+) serves as cofactor. It depends on [4Fe-4S] cluster as a cofactor.

It is found in the cytoplasm. The protein resides in the nucleus. The protein localises to the mitochondrion. In terms of biological role, single-stranded DNA (ssDNA) bidirectional exonuclease involved in DNA repair. Probably involved in DNA repair following ultraviolet (UV) irradiation and interstrand cross-links (ICLs) damage. Has both 5'-3' and 3'-5' exonuclease activities with a strong preference for 5'-ends. Acts as a sliding exonuclease that loads at ssDNA ends and then slides along the ssDNA prior to cutting; however the sliding and the 3'-5' exonuclease activities are abolished upon binding to the replication protein A (RPA) complex that enforces 5'-directionality activity. Functionally, plays a redundant role with the flap endonuclease FEN1/rad2 for the maintenance of mitochondrial DNA. The polypeptide is Exonuclease V (exo5) (Schizosaccharomyces pombe (strain 972 / ATCC 24843) (Fission yeast)).